We begin with the raw amino-acid sequence, 466 residues long: 3-isopropylmalate dehydratase large subunit (466 aa).

3 residues coordinate [4Fe-4S] cluster: C347, C407, and C410.

This sequence belongs to the aconitase/IPM isomerase family. LeuC type 1 subfamily. Heterodimer of LeuC and LeuD. It depends on [4Fe-4S] cluster as a cofactor.

It catalyses the reaction (2R,3S)-3-isopropylmalate = (2S)-2-isopropylmalate. It participates in amino-acid biosynthesis; L-leucine biosynthesis; L-leucine from 3-methyl-2-oxobutanoate: step 2/4. In terms of biological role, catalyzes the isomerization between 2-isopropylmalate and 3-isopropylmalate, via the formation of 2-isopropylmaleate. This Shewanella halifaxensis (strain HAW-EB4) protein is 3-isopropylmalate dehydratase large subunit.